The sequence spans 407 residues: MSQQTEPATPLLSRSMNAVIIAQFFSAFGDNALLFATLALIKQLVYPDWSQPFLQMGFVAAYIILAPFVGQIADSFSKGQVMMFANTLKLAGALLICVGGNPFLGYTLVGVGAAAYSPAKYGILGEITRGDQLVKANGLMEASTIAAILTGSVAGGVLADWNIYGALSICAVAYGIALGANMLIPRLNAARPGQPWHPVQMASSFFSACRVLWRDGDARLSLVGTSMFWGAGVTLRFLLVLWVPHALGITDNATPTLLNAMVAVGIVVGAGAAAKLVTLDSVRRCLPAGFLIGVVVVIFTLQHNLMSAYSLLILLGALGGFFIVPLNALLQERGKASVGAGNAIAVQNLGENGAMLLMLGLYSLVVKLGVSVIAIGIGFGVLFALAIALLWVWLILAKRRDRSASAE.

11 helical membrane passes run 18–38 (AVII…FATL), 53–73 (FLQM…GQIA), 91–111 (AGAL…LVGV), 139–159 (LMEA…GVLA), 163–183 (IYGA…ANML), 229–249 (WGAG…ALGI), 257–277 (LLNA…AKLV), 286–306 (LPAG…HNLM), 310–330 (SLLI…NALL), 343–365 (AIAV…YSLV), and 375–395 (IGIG…VWLI).

The protein belongs to the major facilitator superfamily. LplT (TC 2.A.1.42) family.

It is found in the cell inner membrane. Its function is as follows. Catalyzes the facilitated diffusion of 2-acyl-glycero-3-phosphoethanolamine (2-acyl-GPE) into the cell. This chain is Lysophospholipid transporter LplT, found in Pectobacterium carotovorum subsp. carotovorum (strain PC1).